We begin with the raw amino-acid sequence, 217 residues long: ITG-like peptide (217 aa).

Positions 1–21 (MHRTMAVTAVLVLSAAGAAHA) are cleaved as a signal peptide. The propeptide occupies 22–208 (WGGLFNRFSS…REFVQHTAGE (187 aa)).

As to expression, ITG-like peptide: Expressed in corpora cardiaca (CC), corpora allata (CA), antennal lobe (AL) and gnathal ganglion (GNG) (at protein level). Expression in AL detected in all animals, expression in GNG detected in most animals and in CA and CC detected in few animals (at protein level).

The protein resides in the secreted. In Agrotis ipsilon (Black cutworm moth), this protein is ITG-like peptide.